The sequence spans 155 residues: Small ribosomal subunit protein uS7 (155 aa).

Belongs to the universal ribosomal protein uS7 family. In terms of assembly, part of the 30S ribosomal subunit. Contacts proteins S9 and S11.

In terms of biological role, one of the primary rRNA binding proteins, it binds directly to 16S rRNA where it nucleates assembly of the head domain of the 30S subunit. Is located at the subunit interface close to the decoding center, probably blocks exit of the E-site tRNA. The chain is Small ribosomal subunit protein uS7 from Chlorobium chlorochromatii (strain CaD3).